Consider the following 301-residue polypeptide: Acetylglutamate kinase (301 aa).

Residues 68–69, arginine 90, and asparagine 195 contribute to the substrate site; that span reads GG.

The protein belongs to the acetylglutamate kinase family. ArgB subfamily.

Its subcellular location is the cytoplasm. The catalysed reaction is N-acetyl-L-glutamate + ATP = N-acetyl-L-glutamyl 5-phosphate + ADP. Its pathway is amino-acid biosynthesis; L-arginine biosynthesis; N(2)-acetyl-L-ornithine from L-glutamate: step 2/4. In terms of biological role, catalyzes the ATP-dependent phosphorylation of N-acetyl-L-glutamate. This Pseudomonas putida (strain ATCC 700007 / DSM 6899 / JCM 31910 / BCRC 17059 / LMG 24140 / F1) protein is Acetylglutamate kinase.